A 402-amino-acid polypeptide reads, in one-letter code: Advanced glycosylation end product-specific receptor (402 aa).

The signal sequence occupies residues 1 to 22 (MPAGTAARAWVLVLALWGAVAG). Residues 23–109 (GQNITARIGE…ATNRRGKEVK (87 aa)) enclose the Ig-like V-type domain. At 23 to 340 (GQNITARIGE…VGESGLGTLA (318 aa)) the chain is on the extracellular side. 2 N-linked (GlcNAc...) asparagine glycosylation sites follow: Asn25 and Asn80. Disulfide bonds link Cys38-Cys98 and Cys143-Cys206. 2 consecutive Ig-like C2-type domains span residues 123–219 (PEIV…RPLN) and 233–315 (PEGI…PPVS). Residues 295-332 (GTYSCVATHPSHGPQESPPVSIRVTETGDEGPAEGSVG) form a disordered region. Residues 341–361 (LALGILGGLGVVALLVGAILW) form a helical membrane-spanning segment. The Cytoplasmic portion of the chain corresponds to 362 to 402 (RKRQPRREERKAPESQEDEEERAELNQSEEAEMPENGAGGP). The segment at 365 to 402 (QPRREERKAPESQEDEEERAELNQSEEAEMPENGAGGP) is disordered. Residues Ser376 and Ser389 each carry the phosphoserine; by ATM modification. Residues 376 to 394 (SQEDEEERAELNQSEEAEM) are compositionally biased toward acidic residues.

In terms of assembly, constitutive homodimer; disulfide-linked. Forms homooligomers. Interacts with S100A1 and APP. Interacts with S100B, S100A12 and S100A14. Interacts with TIRAP. Interacts with HMGB1. Interacts with LGP2; this interaction plays an important role in AGER-mediated pro-inflammatory responses and cytokine release. Interacts with double-strand break repair protein MRE11 which is a core component of the MRN complex; the interaction enhances MRE11 endonuclease activity and promotes DNA repair. Interacts with the MCM2-7 complex via interaction with complex member MCM2; the interaction is increased following DNA replication stress and stabilizes the MCM2-7 complex at replication forks. Post-translationally, phosphorylated on its cytoplasmic domain by PKCzeta/PRKCZ upon ligand binding. Phosphorylated by ATM following DNA damage. In terms of processing, targeted by the ubiquitin E3 ligase subunit FBXO10 to mediate its ubiquitination and degradation. Isoform 1: Expressed at higher levels in the coronary arterioles in type 2 diabetic mice (at protein level). Endothelial cells. Expressed in lung, kidney, brain and heart. Most prevalent isoform with the highest level in heart. Isoform 2: Expressed in brain, lung, kidney and small intestine with the highest level in lung. Expressed in brain, lung, kidney and small intestine with the highest level in small intestine (at protein level). Detected in neurons of the cerebrum, bronchial epithelium, endothelial cells, tubular cells of kidney and epithelial cells of small intestine (at protein level). Expression is increased in the kidney of diabetic wild-type mice (at protein level), but not in the other tissues. Expressed only in kidney. Expression is increased in the kidney of diabetic mice. Isoform 3: Expressed in lung, kidney and heart. The second most prevalent isoform with the highest level in lung. Not expressed in brain. Isoform 4: Expressed at very low level in lung only. Isoform 5: Expressed at very low level in lung only. Isoform 6: Expressed at very low level in lung only. Isoform 7: Expressed at very low level in heart only. Isoform 8: Expressed at very low level in lung only. Isoform 9: Expressed at very low level in heart only. Isoform 10: Expressed in lung, brain, heart and kidney with a very high level in kidney. Isoform 11: Expressed in brain, kidney and heart. Not expressed in lung. Isoform 12: Expressed at very low level in lung and kidney. Isoform 13: Expressed at very low level in lung only.

The protein localises to the cell membrane. Its subcellular location is the cell projection. It is found in the phagocytic cup. The protein resides in the early endosome. It localises to the nucleus. The protein localises to the secreted. Cell surface pattern recognition receptor that senses endogenous stress signals with a broad ligand repertoire including advanced glycation end products, S100 proteins, high-mobility group box 1 protein/HMGB1, amyloid beta/APP oligomers, nucleic acids, histones, phospholipids and glycosaminoglycans. Advanced glycosylation end products are nonenzymatically glycosylated proteins which accumulate in vascular tissue in aging and at an accelerated rate in diabetes. These ligands accumulate at inflammatory sites during the pathogenesis of various diseases including diabetes, vascular complications, neurodegenerative disorders and cancers, and RAGE transduces their binding into pro-inflammatory responses. Upon ligand binding, uses TIRAP and MYD88 as adapters to transduce the signal ultimately leading to the induction of inflammatory cytokines IL6, IL8 and TNFalpha through activation of NF-kappa-B. Interaction with S100A12 on endothelium, mononuclear phagocytes, and lymphocytes triggers cellular activation, with generation of key pro-inflammatory mediators. Interaction with S100B after myocardial infarction may play a role in myocyte apoptosis by activating ERK1/2 and p53/TP53 signaling. Contributes to the translocation of amyloid-beta peptide (ABPP) across the cell membrane from the extracellular to the intracellular space in cortical neurons. ABPP-initiated RAGE signaling, especially stimulation of p38 mitogen-activated protein kinase (MAPK), has the capacity to drive a transport system delivering ABPP as a complex with RAGE to the intraneuronal space. Participates in endothelial albumin transcytosis together with HMGB1 through the RAGE/SRC/Caveolin-1 pathway, leading to endothelial hyperpermeability. Mediates the loading of HMGB1 in extracellular vesicles (EVs) that shuttle HMGB1 to hepatocytes by transferrin-mediated endocytosis and subsequently promote hepatocyte pyroptosis by activating the NLRP3 inflammasome. Binds to DNA and promotes extracellular hypomethylated DNA (CpG DNA) uptake by cells via the endosomal route to activate inflammatory responses. Mediates phagocytosis by non-professional phagocytes (NPP) and this is enhanced by binding to ligands including RNA, DNA, HMGB1 and histones. Promotes NPP-mediated phagocytosis of Saccharomyces cerevisiae spores by binding to RNA attached to the spore wall. Also promotes NPP-mediated phagocytosis of apoptotic cells. Following DNA damage, recruited to DNA double-strand break sites where it colocalizes with the MRN repair complex via interaction with double-strand break repair protein MRE11. Enhances the endonuclease activity of MRE11, promoting the end resection of damaged DNA. Promotes DNA damage repair in trophoblasts which enhances trophoblast invasion and contributes to placental development and maintenance. Protects cells from DNA replication stress by localizing to damaged replication forks where it stabilizes the MCM2-7 complex and promotes faithful progression of the replication fork. In terms of biological role, is able to advanced glycosylation end product (AGE)-induce nuclear factor NF-kappa-B activation. Functionally, down-regulates receptor for advanced glycosylation end products (RAGE)-ligand induced signaling through various MAPK pathways including ERK1/2, p38 and SAPK/JNK. Significantly affects tumor cell properties through decreasing cell migration, invasion, adhesion and proliferation, and increasing cellular apoptosis. Exhibits drastic inhibition on tumorigenesis in vitro. The chain is Advanced glycosylation end product-specific receptor (Ager) from Mus musculus (Mouse).